The chain runs to 459 residues: tRNA modification GTPase MnmE (459 aa).

(6S)-5-formyl-5,6,7,8-tetrahydrofolate-binding residues include R23, E88, and R127. The 159-residue stretch at 223 to 381 (GLNTVIVGKP…FKEVIKELFF (159 aa)) folds into the TrmE-type G domain. N233 serves as a coordination point for K(+). GTP is bound by residues 233–238 (NVGKSS), 252–258 (TDVPGTT), and 277–280 (DTAG). A Mg(2+)-binding site is contributed by S237. K(+)-binding residues include T252, V254, and T257. Mg(2+) is bound at residue T258. K459 contributes to the (6S)-5-formyl-5,6,7,8-tetrahydrofolate binding site.

The protein belongs to the TRAFAC class TrmE-Era-EngA-EngB-Septin-like GTPase superfamily. TrmE GTPase family. As to quaternary structure, homodimer. Heterotetramer of two MnmE and two MnmG subunits. The cofactor is K(+).

Its subcellular location is the cytoplasm. Functionally, exhibits a very high intrinsic GTPase hydrolysis rate. Involved in the addition of a carboxymethylaminomethyl (cmnm) group at the wobble position (U34) of certain tRNAs, forming tRNA-cmnm(5)s(2)U34. This Clostridium novyi (strain NT) protein is tRNA modification GTPase MnmE.